The sequence spans 678 residues: Methionine--tRNA ligase (678 aa).

The 'HIGH' region motif lies at 14 to 24 (PYANGSIHLGH). Positions 145, 148, 158, and 161 each coordinate Zn(2+). The 'KMSKS' region motif lies at 331-335 (KMSKS). An ATP-binding site is contributed by Lys-334. The tRNA-binding domain maps to 576–678 (AFAAVDLRIA…SGAKPGQRVK (103 aa)).

The protein belongs to the class-I aminoacyl-tRNA synthetase family. MetG type 1 subfamily. As to quaternary structure, homodimer. Zn(2+) serves as cofactor.

It is found in the cytoplasm. It catalyses the reaction tRNA(Met) + L-methionine + ATP = L-methionyl-tRNA(Met) + AMP + diphosphate. Is required not only for elongation of protein synthesis but also for the initiation of all mRNA translation through initiator tRNA(fMet) aminoacylation. In Ectopseudomonas mendocina (strain ymp) (Pseudomonas mendocina), this protein is Methionine--tRNA ligase.